A 129-amino-acid polypeptide reads, in one-letter code: Bacteriohemerythrin (129 aa).

Residues H19, H59, E63, H78, H82, H119, and D124 each coordinate Fe cation.

This sequence belongs to the hemerythrin family. In terms of assembly, monomer.

Functionally, oxygen-binding protein. May be involved in a storage mechanism or for delivery to oxygen-requiring enzymes. The oxygen-binding site contains two iron atoms. This Clostridium acetobutylicum (strain ATCC 824 / DSM 792 / JCM 1419 / IAM 19013 / LMG 5710 / NBRC 13948 / NRRL B-527 / VKM B-1787 / 2291 / W) protein is Bacteriohemerythrin.